The sequence spans 1111 residues: Myosin IB heavy chain (1111 aa).

In terms of domain architecture, Myosin motor spans 9 to 691 (QGTDDLVMLP…TVFLLEEALD (683 aa)). 102 to 109 (GESGAGKT) serves as a coordination point for ATP. Ser-332 bears the Phosphoserine mark. The segment at 547 to 627 (GSLQKKRPTT…GFAYRNTFDK (81 aa)) is actin-binding. The TH1 domain occupies 729–913 (KERQRNSIDR…KGLIGTIASG (185 aa)). The tract at residues 910–1058 (IASGLPSSTD…PAPQPSRPTA (149 aa)) is disordered. The span at 914 to 928 (LPSSTDSTPKNYNPN) shows a compositional bias: polar residues. 3 stretches are compositionally biased toward low complexity: residues 929–944 (SMSQASSRPAPQQSAG), 952–967 (GAGQPQPQQPQQQQRP), and 991–1012 (PMGAPQQGGAPQQGAGRQLPQP). Residues 1017–1040 (GAPGGRGAPMGRGAPGGGPAGAGG) show a composition bias toward gly residues. An SH3 domain is found at 1053-1111 (PSRPTAKALYDYDASSTDELSFKEGDIIFIVQKDNGGWTQGELKSGQKGWAPTNYLQYN).

The protein belongs to the TRAFAC class myosin-kinesin ATPase superfamily. Myosin family. Myosin I heavy chain is single-headed. Dimer of a heavy and a light chain. Inability to self-assemble into filaments.

It localises to the cell projection. Its subcellular location is the pseudopodium. The protein resides in the cytoplasm. It is found in the cell cortex. Myosin is a protein that binds to actin and has ATPase activity that is activated by actin. Myosin IB may have a role in chemotaxis and aggregation; it could serve to stabilize and even retract cortical structures, such as pseudopods and lamellopods. Involved in the whole cell motility of aggregation-stages cells. Overexpression results in significant decrease in the rate of cellular translocation and fluid-phase pinocytosis and abnormalities in the normal rearrangement of the actin cytoskeleton. This chain is Myosin IB heavy chain (myoB), found in Dictyostelium discoideum (Social amoeba).